Consider the following 232-residue polypeptide: MDIKNLLNPIERPEVTSELTNNVVLTTLNDLYNWARLSSVWPLMYGTSCCFIEFAGLIGSRFDFDRFGLVPRASPRQADLIITAGTVTMKMAPALVTLYEQMPEPKYVIAMGACTITGGMFSTDSYTTVRGVDKLIPVDVYIPGCPPRPEAIFDAIVKLRKKMATEDVRDRYEQIRQTHRYHTTAHTLKAVPESLSSKYLESPTRQAPPPGLAAAMEMPLVLPEVVKQNEQV.

Residues cysteine 49, cysteine 50, cysteine 114, and cysteine 145 each coordinate [4Fe-4S] cluster.

The protein belongs to the complex I 20 kDa subunit family. NDH-1 can be composed of about 15 different subunits; different subcomplexes with different compositions have been identified which probably have different functions. Requires [4Fe-4S] cluster as cofactor.

The protein localises to the cell inner membrane. The enzyme catalyses a plastoquinone + NADH + (n+1) H(+)(in) = a plastoquinol + NAD(+) + n H(+)(out). The catalysed reaction is a plastoquinone + NADPH + (n+1) H(+)(in) = a plastoquinol + NADP(+) + n H(+)(out). In terms of biological role, NDH-1 shuttles electrons from an unknown electron donor, via FMN and iron-sulfur (Fe-S) centers, to quinones in the respiratory and/or the photosynthetic chain. The immediate electron acceptor for the enzyme in this species is believed to be plastoquinone. Couples the redox reaction to proton translocation, and thus conserves the redox energy in a proton gradient. Cyanobacterial NDH-1 also plays a role in inorganic carbon-concentration. The chain is NAD(P)H-quinone oxidoreductase subunit K 1 from Gloeobacter violaceus (strain ATCC 29082 / PCC 7421).